We begin with the raw amino-acid sequence, 115 residues long: Large ribosomal subunit protein bL20 (115 aa).

Belongs to the bacterial ribosomal protein bL20 family.

Binds directly to 23S ribosomal RNA and is necessary for the in vitro assembly process of the 50S ribosomal subunit. It is not involved in the protein synthesizing functions of that subunit. In Borreliella burgdorferi (strain ATCC 35210 / DSM 4680 / CIP 102532 / B31) (Borrelia burgdorferi), this protein is Large ribosomal subunit protein bL20 (rplT).